Consider the following 1024-residue polypeptide: Beta-galactosidase (1024 aa).

Residues Asn-103 and Asp-202 each contribute to the substrate site. Asp-202 serves as a coordination point for Na(+). Glu-417, His-419, and Glu-462 together coordinate Mg(2+). Residues Glu-462 and 538-541 (EYAH) each bind substrate. The active-site Proton donor is Glu-462. Glu-538 acts as the Nucleophile in catalysis. Position 598 (Asn-598) interacts with Mg(2+). Na(+) is bound by residues Phe-602 and Asn-605. Asn-605 and Trp-1000 together coordinate substrate.

The protein belongs to the glycosyl hydrolase 2 family. In terms of assembly, homotetramer. The cofactor is Mg(2+). Na(+) serves as cofactor.

It catalyses the reaction Hydrolysis of terminal non-reducing beta-D-galactose residues in beta-D-galactosides.. This chain is Beta-galactosidase, found in Escherichia coli (strain UTI89 / UPEC).